A 132-amino-acid chain; its full sequence is Small ribosomal subunit protein uS13 (132 aa).

Residues 101-125 (RGLPVRGQRTKTNARTRKGPRKTVA) show a composition bias toward basic residues. The interval 101–132 (RGLPVRGQRTKTNARTRKGPRKTVANKKIETR) is disordered.

The protein belongs to the universal ribosomal protein uS13 family. Part of the 30S ribosomal subunit. Forms a loose heterodimer with protein S19. Forms two bridges to the 50S subunit in the 70S ribosome.

Its function is as follows. Located at the top of the head of the 30S subunit, it contacts several helices of the 16S rRNA. In the 70S ribosome it contacts the 23S rRNA (bridge B1a) and protein L5 of the 50S subunit (bridge B1b), connecting the 2 subunits; these bridges are implicated in subunit movement. Contacts the tRNAs in the A and P-sites. The polypeptide is Small ribosomal subunit protein uS13 (Ureaplasma urealyticum serovar 10 (strain ATCC 33699 / Western)).